The following is a 275-amino-acid chain: MTSASIHIGSYTSTTNGNTTVVKAPTKESLSTCLSATATTTSPLDSIDIYINTSDLPTHYDSLALASIVPSLSPGGVLSVHVVSASSSAASNESAAVDVVNWSAITTSFVLAGLKAESEQRDGSGGRVYTARKATASQSASSAAATGRINLGGAKTKVKLSLDDDDDDQLIDEDDLLNGGGGMLAPPPTIDTEARAKSNLDDCGGRKACDNCTCGRAEQEAADAAGGPNEQQSKSSACGNCAKGDAFRCAGCPYLGMPAFKEGEEHLVLKLNDDV.

The tract at residues 1 to 147 (MTSASIHIGS…QSASSAAATG (147 aa)) is N-terminal SAM-like domain. Residues 148 to 183 (RINLGGAKTKVKLSLDDDDDDQLIDEDDLLNGGGGM) are linker. [2Fe-2S] cluster is bound by residues cysteine 203, cysteine 209, cysteine 212, and cysteine 214. Residues 203–214 (CGGRKACDNCTC) form a fe-S binding site A region. The [4Fe-4S] cluster site is built by cysteine 238, cysteine 241, cysteine 249, and cysteine 252. 2 consecutive short sequence motifs (cx2C motif) follow at residues 238–241 (CGNC) and 249–252 (CAGC). Residues 238 to 252 (CGNCAKGDAFRCAGC) form a fe-S binding site B region.

The protein belongs to the anamorsin family. Monomer. Requires [2Fe-2S] cluster as cofactor. [4Fe-4S] cluster is required as a cofactor.

It localises to the cytoplasm. The protein localises to the mitochondrion intermembrane space. Its function is as follows. Component of the cytosolic iron-sulfur (Fe-S) protein assembly (CIA) machinery. Required for the maturation of extramitochondrial Fe-S proteins. Part of an electron transfer chain functioning in an early step of cytosolic Fe-S biogenesis, facilitating the de novo assembly of a [4Fe-4S] cluster on the cytosolic Fe-S scaffold complex. Electrons are transferred from NADPH via a FAD- and FMN-containing diflavin oxidoreductase. Together with the diflavin oxidoreductase, also required for the assembly of the diferric tyrosyl radical cofactor of ribonucleotide reductase (RNR), probably by providing electrons for reduction during radical cofactor maturation in the catalytic small subunit. This Thalassiosira pseudonana (Marine diatom) protein is Anamorsin homolog.